Here is a 304-residue protein sequence, read N- to C-terminus: ATP phosphoribosyltransferase (304 aa).

The protein belongs to the ATP phosphoribosyltransferase family. Long subfamily. It depends on Mg(2+) as a cofactor.

It is found in the cytoplasm. The catalysed reaction is 1-(5-phospho-beta-D-ribosyl)-ATP + diphosphate = 5-phospho-alpha-D-ribose 1-diphosphate + ATP. It participates in amino-acid biosynthesis; L-histidine biosynthesis; L-histidine from 5-phospho-alpha-D-ribose 1-diphosphate: step 1/9. Feedback inhibited by histidine. Functionally, catalyzes the condensation of ATP and 5-phosphoribose 1-diphosphate to form N'-(5'-phosphoribosyl)-ATP (PR-ATP). Has a crucial role in the pathway because the rate of histidine biosynthesis seems to be controlled primarily by regulation of HisG enzymatic activity. The sequence is that of ATP phosphoribosyltransferase from Xanthomonas oryzae pv. oryzae (strain MAFF 311018).